Consider the following 103-residue polypeptide: Pyrimidine/purine nucleoside phosphorylase (103 aa).

It belongs to the nucleoside phosphorylase PpnP family.

It catalyses the reaction a purine D-ribonucleoside + phosphate = a purine nucleobase + alpha-D-ribose 1-phosphate. It carries out the reaction adenosine + phosphate = alpha-D-ribose 1-phosphate + adenine. The catalysed reaction is cytidine + phosphate = cytosine + alpha-D-ribose 1-phosphate. The enzyme catalyses guanosine + phosphate = alpha-D-ribose 1-phosphate + guanine. It catalyses the reaction inosine + phosphate = alpha-D-ribose 1-phosphate + hypoxanthine. It carries out the reaction thymidine + phosphate = 2-deoxy-alpha-D-ribose 1-phosphate + thymine. The catalysed reaction is uridine + phosphate = alpha-D-ribose 1-phosphate + uracil. The enzyme catalyses xanthosine + phosphate = alpha-D-ribose 1-phosphate + xanthine. In terms of biological role, catalyzes the phosphorolysis of diverse nucleosides, yielding D-ribose 1-phosphate and the respective free bases. Can use uridine, adenosine, guanosine, cytidine, thymidine, inosine and xanthosine as substrates. Also catalyzes the reverse reactions. The polypeptide is Pyrimidine/purine nucleoside phosphorylase (Shewanella sp. (strain W3-18-1)).